The sequence spans 724 residues: ATPase family protein 2 homolog (724 aa).

ATP is bound by residues 281–287 (PGSGKTL) and 503–508 (GCSKTL).

It belongs to the AAA ATPase family. AFG2 subfamily. As to quaternary structure, homohexamer; ATP binding induces oligomerization. Forms a ring-shaped particle of about 12 nm diameter, that displays 6-fold radial symmetry. Interacts (via N-terminus) with kinase air-2; the interaction is direct and inhibits air-2 kinase activity in an ATPase-dependent manner.

Its subcellular location is the cytoplasm. The catalysed reaction is ATP + H2O = ADP + phosphate + H(+). ATP-dependent chaperone which uses the energy provided by ATP hydrolysis to generate mechanical force to disassemble protein complexes. Required for various steps of embryonic mitosis including centrosome duplication, spindle assembly, ER dynamics and cell cycle progression. Regulates the stability and activity of kinase air-2, a component of the chromosomal passenger complex (CPC). Inhibits air-2 kinase activity from metaphase to late telophase and negatively regulates air-2 stability during mitotic exit. Controls ER transition into sheet-like structures at the onset of mitosis, possibly by regulating homotypic membrane fusion. The polypeptide is ATPase family protein 2 homolog (Caenorhabditis elegans).